The primary structure comprises 370 residues: Vasopressin V2 receptor (370 aa).

Over residues 1-21 the composition is skewed to polar residues; it reads MFMASTTSAVPWHLSQPTPAG. The tract at residues 1–26 is disordered; it reads MFMASTTSAVPWHLSQPTPAGNGSEG. Over 1 to 38 the chain is Extracellular; the sequence is MFMASTTSAVPWHLSQPTPAGNGSEGELLTARDPLLAQ. Asn-22 carries an N-linked (GlcNAc...) asparagine glycan. Residues 39-63 form a helical membrane-spanning segment; that stretch reads AELALLSTVFVAVALSNGLVLGALV. The Cytoplasmic portion of the chain corresponds to 64-77; the sequence is RRGRRGRWAPMHVF. A helical transmembrane segment spans residues 78 to 98; sequence IGHLCLADLAVALFQVLPQLA. Residues 99-113 lie on the Extracellular side of the membrane; the sequence is WDATDRFRGPDALCR. The chain crosses the membrane as a helical span at residues 114-135; that stretch reads AVKYLQMVGMYASSYMILAMTL. Residues 136 to 159 lie on the Cytoplasmic side of the membrane; that stretch reads DRHRAICRPMLAHRHGGGTHWNRP. The chain crosses the membrane as a helical span at residues 160 to 180; it reads VLLAWAFSLLFSLPQLFIFAQ. Residues 181 to 199 are Extracellular-facing; the sequence is RDVDGSGVLDCWARFAEPW. A helical transmembrane segment spans residues 200 to 219; the sequence is GLRAYVTWIALMVFVAPALG. Residues 220-270 are Cytoplasmic-facing; the sequence is IAACQVLIFREIHASLGPGPVPRAGGPRRGCRPGSPAEGARVSAAVAKTVK. The helical transmembrane segment at 271–292 threads the bilayer; sequence MTLVIVIVYVLCWAPFFLVQLW. Over 293–307 the chain is Extracellular; that stretch reads AAWDPEAPREGPPFV. Residues 308 to 327 form a helical membrane-spanning segment; it reads LLMLLASLNSCTNPWIYASF. Over 328 to 370 the chain is Cytoplasmic; the sequence is SSSISSELRSLLCCTWRRAPPSPGPQEESCATASSFLAKDTPS. Residues Cys-340 and Cys-341 are each lipidated (S-palmitoyl cysteine). The segment at 347–370 is disordered; sequence PPSPGPQEESCATASSFLAKDTPS.

It belongs to the G-protein coupled receptor 1 family. Vasopressin/oxytocin receptor subfamily. Interacts with ARRDC4. Identified in a complex containing at least ARRDC4, V2R and HGS. Interacts with TMEM147.

The protein resides in the cell membrane. Its function is as follows. Receptor for arginine vasopressin. The activity of this receptor is mediated by G proteins which activate adenylate cyclase. Involved in renal water reabsorption. This chain is Vasopressin V2 receptor (AVPR2), found in Bos taurus (Bovine).